Reading from the N-terminus, the 1384-residue chain is ABC transporter C family member 2 (1384 aa).

In terms of domain architecture, ABC transmembrane type-1 1 spans 104–388 (NKISVATKIF…LPEAIHRALS (285 aa)). 5 helical membrane passes run 112–132 (IFVA…IYYI), 140–160 (TFKF…SLTL), 226–246 (IFVF…IVGL), 247–267 (SGLV…FLST), and 333–353 (MITQ…YALT). Residues 505–724 (IEYDGAVQPS…GIDFESIMKT (220 aa)) enclose the ABC transporter 1 domain. An ATP-binding site is contributed by 537 to 544 (GIVGSGKT). The tract at residues 729–756 (IDENDQSSTSTTDKKSSTSSSSSELKKS) is disordered. Over residues 735–756 (SSTSTTDKKSSTSSSSSELKKS) the composition is skewed to low complexity. Transmembrane regions (helical) follow at residues 813 to 833 (LFFL…LSDF), 852 to 872 (ILYY…RYFM), 941 to 961 (LFMM…LVVV), 1036 to 1056 (GIRL…SSLF), and 1061 to 1081 (GFSV…NWTI). The 280-residue stretch at 814–1093 (FFLTCALYFI…MTELEVKMNS (280 aa)) folds into the ABC transmembrane type-1 2 domain. Positions 1137–1371 (VEFKNVEIKY…EGSRFKKLVK (235 aa)) constitute an ABC transporter 2 domain. 1171–1178 (GRTGAGKS) serves as a coordination point for ATP.

It belongs to the ABC transporter superfamily. ABCC family. Conjugate transporter (TC 3.A.1.208) subfamily.

It localises to the membrane. The chain is ABC transporter C family member 2 (abcC2) from Dictyostelium discoideum (Social amoeba).